The primary structure comprises 300 residues: Cell surface glycoprotein CD200 receptor 1-A (300 aa).

A signal peptide spans 1 to 24; it reads MEIAGKAVCVFLLLAIIKLRRSEG. Residues 25–124 enclose the Ig-like V-type domain; that stretch reads INRVSANLGH…GNFHRLYHLT (100 aa). Over 25–213 the chain is Extracellular; that stretch reads INRVSANLGH…SINCSSSYRD (189 aa). Cystine bridges form between cysteine 40/cysteine 108 and cysteine 143/cysteine 192. N-linked (GlcNAc...) asparagine glycosylation is found at asparagine 45, asparagine 76, asparagine 105, asparagine 171, asparagine 200, and asparagine 206. Positions 122-206 constitute an Ig-like C2-type domain; the sequence is HLTVIVAPRM…ATLNETKSIN (85 aa). A helical transmembrane segment spans residues 214–234; sequence LILCIAIILSFLIIITFMAVI. The Cytoplasmic segment spans residues 235 to 300; that stretch reads YYLKLHGCRF…NLPQGQSPAT (66 aa).

This sequence belongs to the CD200R family. Glycosylated. Post-translationally, phosphorylated. Highly expressed in macrophages, peripheral blood lymphocytes (PBL) and peripheral blood mononuclear cells (PBMC). Weakly expressed in bursa, thymus, spleen, liver and brain.

It is found in the membrane. The protein resides in the secreted. The sequence is that of Cell surface glycoprotein CD200 receptor 1-A (CD200R1A) from Gallus gallus (Chicken).